We begin with the raw amino-acid sequence, 517 residues long: Maturase K (517 aa).

The protein belongs to the intron maturase 2 family. MatK subfamily.

It localises to the plastid. It is found in the chloroplast. Usually encoded in the trnK tRNA gene intron. Probably assists in splicing its own and other chloroplast group II introns. In Caryota mitis (Burmese fishtail palm), this protein is Maturase K.